A 315-amino-acid chain; its full sequence is DNA-directed RNA polymerase subunit alpha (315 aa).

The alpha N-terminal domain (alpha-NTD) stretch occupies residues 1–228 (MAQFQIECVE…DLFNPLKDIS (228 aa)). Positions 243 to 315 (TAQIPIEELQ…LPQERSSKHN (73 aa)) are alpha C-terminal domain (alpha-CTD).

It belongs to the RNA polymerase alpha chain family. In terms of assembly, homodimer. In cyanobacteria the RNAP catalytic core is composed of 2 alpha, 1 beta, 1 beta', 1 gamma and 1 omega subunit. When a sigma factor is associated with the core the holoenzyme is formed, which can initiate transcription.

It carries out the reaction RNA(n) + a ribonucleoside 5'-triphosphate = RNA(n+1) + diphosphate. DNA-dependent RNA polymerase catalyzes the transcription of DNA into RNA using the four ribonucleoside triphosphates as substrates. The protein is DNA-directed RNA polymerase subunit alpha of Nostoc sp. (strain PCC 7120 / SAG 25.82 / UTEX 2576).